Here is a 121-residue protein sequence, read N- to C-terminus: UPF0344 protein BT9727_1053 (121 aa).

A run of 4 helical transmembrane segments spans residues 6 to 26 (ITAW…YSAG), 38 to 58 (LMYI…MKTA), 65 to 85 (WYGL…MVLV), and 92 to 112 (ATGA…YLGL).

The protein belongs to the UPF0344 family.

It is found in the cell membrane. The sequence is that of UPF0344 protein BT9727_1053 from Bacillus thuringiensis subsp. konkukian (strain 97-27).